The primary structure comprises 169 residues: Putative adenylate kinase (169 aa).

The ATP site is built by Gly-10, Gly-12, Lys-13, Thr-14, and Thr-15. The NMP stretch occupies residues His-28–Val-51. Positions Asp-98–Glu-108 are LID. Arg-99 is a binding site for ATP.

Belongs to the adenylate kinase family. AK6 subfamily. Interacts with uS11. Not a structural component of 40S pre-ribosomes, but transiently interacts with them by binding to uS11.

It carries out the reaction AMP + ATP = 2 ADP. The enzyme catalyses ATP + H2O = ADP + phosphate + H(+). Broad-specificity nucleoside monophosphate (NMP) kinase that catalyzes the reversible transfer of the terminal phosphate group between nucleoside triphosphates and monophosphates. Also has ATPase activity. Involved in the late maturation steps of the 30S ribosomal particles, specifically 16S rRNA maturation. While NMP activity is not required for ribosome maturation, ATPase activity is. Associates transiently with small ribosomal subunit protein uS11. ATP hydrolysis breaks the interaction with uS11. May temporarily remove uS11 from the ribosome to enable a conformational change of the ribosomal RNA that is needed for the final maturation step of the small ribosomal subunit. The protein is Putative adenylate kinase of Halobacterium salinarum (strain ATCC 29341 / DSM 671 / R1).